Here is a 91-residue protein sequence, read N- to C-terminus: HssA/B-like protein 52 (91 aa).

Disordered stretches follow at residues 1–20 (MTLF…SKSS) and 72–91 (GGCG…CCGI).

It belongs to the hssA/B family.

This is HssA/B-like protein 52 (hssl52) from Dictyostelium discoideum (Social amoeba).